Here is an 89-residue protein sequence, read N- to C-terminus: MNESRRFLVSGTVQGVFFRSSAKRHAEQLGLSGYARNLVDGRVEVLAHGPTDALDELAKWLEEGPPNAQVTGVEVSAVGEQPPEGFRVL.

One can recognise an Acylphosphatase-like domain in the interval 4–89 (SRRFLVSGTV…EQPPEGFRVL (86 aa)). Active-site residues include arginine 19 and asparagine 37.

This sequence belongs to the acylphosphatase family.

The catalysed reaction is an acyl phosphate + H2O = a carboxylate + phosphate + H(+). In Alkalilimnicola ehrlichii (strain ATCC BAA-1101 / DSM 17681 / MLHE-1), this protein is Acylphosphatase (acyP).